An 89-amino-acid polypeptide reads, in one-letter code: Small ribosomal subunit protein uS15 (89 aa).

Residues 1–13 (MTISKERKEEVIS) are compositionally biased toward basic and acidic residues. The tract at residues 1–24 (MTISKERKEEVISEHGAAAGDTGS) is disordered.

The protein belongs to the universal ribosomal protein uS15 family. As to quaternary structure, part of the 30S ribosomal subunit. Forms a bridge to the 50S subunit in the 70S ribosome, contacting the 23S rRNA.

One of the primary rRNA binding proteins, it binds directly to 16S rRNA where it helps nucleate assembly of the platform of the 30S subunit by binding and bridging several RNA helices of the 16S rRNA. Functionally, forms an intersubunit bridge (bridge B4) with the 23S rRNA of the 50S subunit in the ribosome. This chain is Small ribosomal subunit protein uS15, found in Rhodopirellula baltica (strain DSM 10527 / NCIMB 13988 / SH1).